The chain runs to 127 residues: Calcium-binding protein PBP1 (127 aa).

Positions 1-18 (MASPKSSTRPNQENQEPQ) are enriched in polar residues. The tract at residues 1-20 (MASPKSSTRPNQENQEPQFQ) is disordered. An EF-hand domain is found at 72-107 (LTDDDVRYMINEGDFDRDGALNQMEFCVLMFRLSPE). 4 residues coordinate Ca(2+): D85, D87, D89, and E96.

Interacts with PID.

Potential calcium sensor that binds calcium in vitro. The protein is Calcium-binding protein PBP1 (PBP1) of Arabidopsis thaliana (Mouse-ear cress).